Reading from the N-terminus, the 184-residue chain is Ribose 1,5-bisphosphate phosphokinase PhnN (184 aa).

Residue 11-18 (GPSGAGKD) participates in ATP binding.

The protein belongs to the ribose 1,5-bisphosphokinase family.

The catalysed reaction is alpha-D-ribose 1,5-bisphosphate + ATP = 5-phospho-alpha-D-ribose 1-diphosphate + ADP. The protein operates within metabolic intermediate biosynthesis; 5-phospho-alpha-D-ribose 1-diphosphate biosynthesis; 5-phospho-alpha-D-ribose 1-diphosphate from D-ribose 5-phosphate (route II): step 3/3. Functionally, catalyzes the phosphorylation of ribose 1,5-bisphosphate to 5-phospho-D-ribosyl alpha-1-diphosphate (PRPP). The sequence is that of Ribose 1,5-bisphosphate phosphokinase PhnN from Burkholderia pseudomallei (strain K96243).